A 193-amino-acid polypeptide reads, in one-letter code: ATP-dependent Clp protease proteolytic subunit 1 (193 aa).

Residue serine 98 is the Nucleophile of the active site. The active site involves histidine 123.

This sequence belongs to the peptidase S14 family. Fourteen ClpP subunits assemble into 2 heptameric rings which stack back to back to give a disk-like structure with a central cavity, resembling the structure of eukaryotic proteasomes.

The protein localises to the cytoplasm. The enzyme catalyses Hydrolysis of proteins to small peptides in the presence of ATP and magnesium. alpha-casein is the usual test substrate. In the absence of ATP, only oligopeptides shorter than five residues are hydrolyzed (such as succinyl-Leu-Tyr-|-NHMec, and Leu-Tyr-Leu-|-Tyr-Trp, in which cleavage of the -Tyr-|-Leu- and -Tyr-|-Trp bonds also occurs).. Cleaves peptides in various proteins in a process that requires ATP hydrolysis. Has a chymotrypsin-like activity. Plays a major role in the degradation of misfolded proteins. The chain is ATP-dependent Clp protease proteolytic subunit 1 from Bacillus anthracis.